The primary structure comprises 359 residues: MEHDGTAALGWAARDASGHLSPFSFTRRVQEEDDVTIKVLYCGICHTDLHTIKNEWGNAMYPVVPGHEIVGVVAGVGAGVTRFKAGDTVGVGYFVDSCRACDSCGKGDENYCPTMVITSNGTDYGGATTQGGFSDVMVVRQDYVLRVPASLPPDGAAPLLCAGVTVYSPMVEYGLNAPGKHLGVVGLGGLGHLGVKFGKAFGMKVTVISSSPAKREEALERLGADAFLSSRDGEGMAAAAATMDGIIDTVSAGHPLVPLLSLLKPKGQMVVVGAPAAPLQLPAIAIIDGGKRVAGSGGGSVAECQAMLDFAGEHGIAADVEVVAMGDVNAALGRLERNDVRYRFVIDVAGTLHAAAAPS.

Cys45 contacts Zn(2+). Thr47 contacts NADP(+). 7 residues coordinate Zn(2+): His67, Glu68, Cys98, Cys101, Cys104, Cys112, and Cys161. NADP(+) is bound by residues Thr165, 186–191 (GLGGLG), 209–214 (SSSPAK), Thr249, Gly273, and 296–298 (SGG).

Belongs to the zinc-containing alcohol dehydrogenase family. In terms of assembly, homodimer. Zn(2+) is required as a cofactor.

The catalysed reaction is (E)-cinnamyl alcohol + NADP(+) = (E)-cinnamaldehyde + NADPH + H(+). It catalyses the reaction (E)-coniferol + NADP(+) = (E)-coniferaldehyde + NADPH + H(+). The enzyme catalyses (E)-sinapyl alcohol + NADP(+) = (E)-sinapaldehyde + NADPH + H(+). It carries out the reaction (E)-4-coumaroyl alcohol + NADP(+) = (E)-4-coumaraldehyde + NADPH + H(+). The catalysed reaction is (E)-caffeyl alcohol + NADP(+) = (E)-caffeyl aldehyde + NADPH + H(+). The protein operates within aromatic compound metabolism; phenylpropanoid biosynthesis. Its function is as follows. Involved in lignin biosynthesis. Catalyzes the final step specific for the production of lignin monomers. Catalyzes the NADPH-dependent reduction of coniferaldehyde, 5-hydroxyconiferaldehyde, sinapaldehyde, 4-coumaraldehyde and caffeyl aldehyde to their respective alcohols. This Oryza sativa subsp. japonica (Rice) protein is Probable cinnamyl alcohol dehydrogenase 8A.